Consider the following 116-residue polypeptide: Ribosome-binding factor A (116 aa).

This sequence belongs to the RbfA family. Monomer. Binds 30S ribosomal subunits, but not 50S ribosomal subunits or 70S ribosomes.

It is found in the cytoplasm. In terms of biological role, one of several proteins that assist in the late maturation steps of the functional core of the 30S ribosomal subunit. Associates with free 30S ribosomal subunits (but not with 30S subunits that are part of 70S ribosomes or polysomes). Required for efficient processing of 16S rRNA. May interact with the 5'-terminal helix region of 16S rRNA. The sequence is that of Ribosome-binding factor A from Ureaplasma parvum serovar 3 (strain ATCC 27815 / 27 / NCTC 11736).